The following is a 281-amino-acid chain: Undecaprenyl-diphosphatase (281 aa).

Helical transmembrane passes span 49–69 (SANTFKIVIQLGSIFAAAWIF), 92–112 (LHIFIGLIPAGIMGLLFDDFI), 116–136 (LFSVPTVLIGLALGALLMIAA), 152–172 (MTYKQALIIGVAQCLALWPGF), 196–216 (TFIMAVPIMFAASAKSLASNI), 224–244 (ILFYIVGFIAAFIFGVLSIRL), and 257–277 (FAIYRLILVAVIAVLYFGFGI).

Belongs to the UppP family.

Its subcellular location is the cell membrane. The catalysed reaction is di-trans,octa-cis-undecaprenyl diphosphate + H2O = di-trans,octa-cis-undecaprenyl phosphate + phosphate + H(+). In terms of biological role, catalyzes the dephosphorylation of undecaprenyl diphosphate (UPP). Confers resistance to bacitracin. The polypeptide is Undecaprenyl-diphosphatase (Macrococcus caseolyticus (strain JCSC5402) (Macrococcoides caseolyticum)).